A 372-amino-acid chain; its full sequence is Probable inactive receptor-like protein kinase At1g65250 (372 aa).

Residues 1-4 and Lys38 contribute to the ATP site; that span reads MGWL. The 314-residue stretch at 1–314 folds into the Protein kinase domain; sequence MGWLRKKKKP…QERCQMKAFL (314 aa). Tyr128 and Tyr221 each carry phosphotyrosine. A disordered region spans residues 348–372; the sequence is SSSLSSGQTQLDSAQDISSTVVLSN. Residues 354-372 show a composition bias toward polar residues; that stretch reads GQTQLDSAQDISSTVVLSN.

Belongs to the protein kinase superfamily.

The sequence is that of Probable inactive receptor-like protein kinase At1g65250 from Arabidopsis thaliana (Mouse-ear cress).